A 463-amino-acid chain; its full sequence is Nicotinate phosphoribosyltransferase pncB2 (463 aa).

Histidine 202 is modified (phosphohistidine).

The protein belongs to the NAPRTase family. In terms of processing, transiently phosphorylated on a His residue during the reaction cycle. Phosphorylation strongly increases the affinity for substrates and increases the rate of nicotinate D-ribonucleotide production. Dephosphorylation regenerates the low-affinity form of the enzyme, leading to product release.

It catalyses the reaction nicotinate + 5-phospho-alpha-D-ribose 1-diphosphate + ATP + H2O = nicotinate beta-D-ribonucleotide + ADP + phosphate + diphosphate. Its pathway is cofactor biosynthesis; NAD(+) biosynthesis; nicotinate D-ribonucleotide from nicotinate: step 1/1. Its function is as follows. Involved in the Preiss-Handler pathway, which is a recycling route that permits the salvage of free nicotinamide (NM) and nicotinic acid (Na) involved in the NAD biosynthesis. Catalyzes the synthesis of beta-nicotinate D-ribonucleotide from nicotinate and 5-phospho-D-ribose 1-phosphate at the expense of ATP. It is not able to use nicotinamide. PncB2 appears to be responsible for the increased salvage synthesis of NAD during infection of host tissues. The polypeptide is Nicotinate phosphoribosyltransferase pncB2 (pncB2) (Mycobacterium tuberculosis (strain CDC 1551 / Oshkosh)).